Here is a 237-residue protein sequence, read N- to C-terminus: Isoprenyl transferase (237 aa).

Asp14 is an active-site residue. Position 14 (Asp14) interacts with Mg(2+). Substrate contacts are provided by residues 15-18, Trp19, Arg27, His31, and 59-61; these read GNGR and STE. Catalysis depends on Asn62, which acts as the Proton acceptor. Substrate-binding positions include Trp63, Arg65, Arg184, and 190–192; that span reads RIS. Glu203 provides a ligand contact to Mg(2+).

It belongs to the UPP synthase family. In terms of assembly, homodimer. Mg(2+) serves as cofactor.

Functionally, catalyzes the condensation of isopentenyl diphosphate (IPP) with allylic pyrophosphates generating different type of terpenoids. The polypeptide is Isoprenyl transferase (Helicobacter hepaticus (strain ATCC 51449 / 3B1)).